A 560-amino-acid polypeptide reads, in one-letter code: (E)-beta-farnesene synthase (560 aa).

Mg(2+) is bound by residues D312, D316, D457, and E465. The DDXXD motif motif lies at 312-316 (DDTFD).

It belongs to the terpene synthase family. The cofactor is Mg(2+). Requires Co(2+) as cofactor. Mn(2+) serves as cofactor.

The protein resides in the cytoplasm. The catalysed reaction is (2E,6E)-farnesyl diphosphate = (E)-beta-farnesene + diphosphate. It participates in secondary metabolite biosynthesis; terpenoid biosynthesis. Sesquiterpene cyclase catalyzing the production of beta-farnesene from farnesyl diphosphate. The sequence is that of (E)-beta-farnesene synthase from Citrus junos (Yuzu).